Reading from the N-terminus, the 117-residue chain is Large ribosomal subunit protein bL17 (117 aa).

This sequence belongs to the bacterial ribosomal protein bL17 family. In terms of assembly, part of the 50S ribosomal subunit. Contacts protein L32.

This is Large ribosomal subunit protein bL17 from Campylobacter lari (strain RM2100 / D67 / ATCC BAA-1060).